The chain runs to 244 residues: MTLDLDAHKKDDKLLITTIQQEYKILAEYKMIESEKLSGIYVIPSYANSLQWFGVFFGRQGLYAESVFRFTILLPDRFPDDKSLPTIIFQQDVIHPHVCPYTHSLDVSHAFPEWRCGEDHLWQLLKYLQVIFSDPLDSIRGIEVDKLKNREAAELLMNNKEEYVARVQENIKESKEHIFDTPPTEDPHYIVFEKFQQDVHGPVLERIKAGRSKQTEPSAQQGNGGHATGLSWVKEGEFKPLSIE.

Residues glutamine 20–glutamate 176 form the UBC core domain. The disordered stretch occupies residues alanine 209–glutamate 244.

It belongs to the ubiquitin-conjugating enzyme family. FTS subfamily.

In Drosophila simulans (Fruit fly), this protein is Protein crossbronx (cbx).